Here is a 215-residue protein sequence, read N- to C-terminus: 3-isopropylmalate dehydratase small subunit (215 aa).

Belongs to the LeuD family. LeuD type 1 subfamily. As to quaternary structure, heterodimer of LeuC and LeuD.

It catalyses the reaction (2R,3S)-3-isopropylmalate = (2S)-2-isopropylmalate. It functions in the pathway amino-acid biosynthesis; L-leucine biosynthesis; L-leucine from 3-methyl-2-oxobutanoate: step 2/4. Catalyzes the isomerization between 2-isopropylmalate and 3-isopropylmalate, via the formation of 2-isopropylmaleate. The protein is 3-isopropylmalate dehydratase small subunit of Teredinibacter turnerae (strain ATCC 39867 / T7901).